The sequence spans 381 residues: Opsin-1 (381 aa).

The Extracellular portion of the chain corresponds to Met1 to Trp53. Asn24 is a glycosylation site (N-linked (GlcNAc...) asparagine). Residues His54–Ile78 traverse the membrane as a helical segment. The Cytoplasmic segment spans residues Phe79 to Asn90. The chain crosses the membrane as a helical span at residues Leu91–Cys115. Over Tyr116–Tyr130 the chain is Extracellular. A disulfide bond links Cys127 and Cys204. Residues Ala131 to Leu150 traverse the membrane as a helical segment. At Asp151 to Thr169 the chain is on the cytoplasmic side. The chain crosses the membrane as a helical span at residues Ala170–Asn193. The Extracellular portion of the chain corresponds to Arg194–Ser217. The N-linked (GlcNAc...) asparagine glycan is linked to Asn200. The helical transmembrane segment at Tyr218–Val245 threads the bilayer. Topologically, residues Ser246–Lys280 are cytoplasmic. Residues Val281–Ile304 form a helical membrane-spanning segment. Topologically, residues Phe305–Ser311 are extracellular. The chain crosses the membrane as a helical span at residues Pro312–Ser336. Lys323 carries the post-translational modification N6-(retinylidene)lysine. The Cytoplasmic segment spans residues His337 to Ala381. Polar residues predominate over residues Ala354 to Val370. Residues Ala354–Ala381 are disordered. Residues Ser371 to Ala381 are compositionally biased toward basic and acidic residues.

The protein belongs to the G-protein coupled receptor 1 family. Opsin subfamily. In terms of processing, phosphorylated on some or all of the serine and threonine residues present in the C-terminal region.

The protein resides in the cell projection. Its subcellular location is the rhabdomere membrane. Its function is as follows. Visual pigments are the light-absorbing molecules that mediate vision. They consist of an apoprotein, opsin, covalently linked to cis-retinal. The polypeptide is Opsin-1 (Lo1) (Schistocerca gregaria (Desert locust)).